Here is a 621-residue protein sequence, read N- to C-terminus: UvrABC system protein C (621 aa).

Residues 20-98 (TAPGVYRMYA…IKSLTPRYNV (79 aa)) form the GIY-YIG domain. The UVR domain maps to 207-242 (DLLAEELIQAMQVASEHLEFEQAARLRDLLTSLRSM).

It belongs to the UvrC family. In terms of assembly, interacts with UvrB in an incision complex.

It localises to the cytoplasm. Functionally, the UvrABC repair system catalyzes the recognition and processing of DNA lesions. UvrC both incises the 5' and 3' sides of the lesion. The N-terminal half is responsible for the 3' incision and the C-terminal half is responsible for the 5' incision. The protein is UvrABC system protein C of Xylella fastidiosa (strain Temecula1 / ATCC 700964).